Here is a 609-residue protein sequence, read N- to C-terminus: UvrABC system protein C (609 aa).

The 79-residue stretch at 16 to 94 folds into the GIY-YIG domain; it reads SSAGVYRMYD…IKQYMPRYNV (79 aa). Residues 203–238 form the UVR domain; it reads QQVIATLVGKMEQAAMDLNYEDAARYRDQISALRRV.

This sequence belongs to the UvrC family. Interacts with UvrB in an incision complex.

The protein resides in the cytoplasm. In terms of biological role, the UvrABC repair system catalyzes the recognition and processing of DNA lesions. UvrC both incises the 5' and 3' sides of the lesion. The N-terminal half is responsible for the 3' incision and the C-terminal half is responsible for the 5' incision. The protein is UvrABC system protein C of Shewanella loihica (strain ATCC BAA-1088 / PV-4).